The primary structure comprises 154 residues: 3-hydroxyacyl-[acyl-carrier-protein] dehydratase FabZ (154 aa).

H54 is a catalytic residue.

This sequence belongs to the thioester dehydratase family. FabZ subfamily.

The protein localises to the cytoplasm. It carries out the reaction a (3R)-hydroxyacyl-[ACP] = a (2E)-enoyl-[ACP] + H2O. Involved in unsaturated fatty acids biosynthesis. Catalyzes the dehydration of short chain beta-hydroxyacyl-ACPs and long chain saturated and unsaturated beta-hydroxyacyl-ACPs. This is 3-hydroxyacyl-[acyl-carrier-protein] dehydratase FabZ from Chlamydia abortus (strain DSM 27085 / S26/3) (Chlamydophila abortus).